We begin with the raw amino-acid sequence, 535 residues long: Protein PyrBI (535 aa).

An aspartate carbamoyltransferase region spans residues 1 to 341; that stretch reads MENKFMGRSL…MIAGKIGDDY (341 aa). Positions 342-370 are linker; that stretch reads KGPEPKSCERVEDEDYIVEVPINNSKESK. The tract at residues 371 to 535 is aspartate carbamoyltransferase regulatory region; the sequence is VETFSEGVRP…FKEIWGEKKN (165 aa). Zn(2+) is bound by residues C488, C493, C517, and C520.

In the N-terminal section; belongs to the aspartate/ornithine carbamoyltransferase superfamily. ATCase family. This sequence in the C-terminal section; belongs to the PyrI family.

It carries out the reaction carbamoyl phosphate + L-aspartate = N-carbamoyl-L-aspartate + phosphate + H(+). The protein operates within pyrimidine metabolism; UMP biosynthesis via de novo pathway; (S)-dihydroorotate from bicarbonate: step 2/3. The polypeptide is Protein PyrBI (pyrBI) (Treponema denticola (strain ATCC 35405 / DSM 14222 / CIP 103919 / JCM 8153 / KCTC 15104)).